We begin with the raw amino-acid sequence, 312 residues long: MAQQGQGSMDPAVLDDIIRRLLDYRNPKAGTKQAMLNDSEIRQLCFVSREIFLQQPCLLELAAPVKICGDIHGQYSDLLRLFEYGGFPPAANYLFLGDYVDRGKQSLETICLLLAYKIKYPENFFLLRGNHECASINRIYGFYDECKRRFNVKLWKVFTDTFNCLPVAAVIDEKILCMHGGLSPELINVEQIKNIERPTDVPDAGLLCDLLWSDPSKDVKGWGMNDRGVSYTFGADKVAEFLIKNDMDLVCRAHQVVEDGYEFFADRQLVTMFSAPNYCGEFDNAGALMSVDESLMCSFQILKPVDRRSRFF.

Alanine 2 is subject to N-acetylalanine. Aspartate 70, histidine 72, aspartate 98, and asparagine 130 together coordinate Mn(2+). The active-site Proton donor is histidine 131. The Mn(2+) site is built by histidine 179 and histidine 254.

This sequence belongs to the PPP phosphatase family. PP-1 subfamily. Mn(2+) is required as a cofactor.

It localises to the nucleus. The protein localises to the cytoplasm. It catalyses the reaction O-phospho-L-seryl-[protein] + H2O = L-seryl-[protein] + phosphate. The enzyme catalyses O-phospho-L-threonyl-[protein] + H2O = L-threonyl-[protein] + phosphate. With respect to regulation, phosphatase activity is strongly reduced by the protein phosphatase inhibitor 2 (I-2). In terms of biological role, serine/threonine-protein phosphatase that possesses phosphatase activity toward para-nitrophenyl phosphate (pNPP) in vitro. This chain is Serine/threonine-protein phosphatase PP1 isozyme 5, found in Arabidopsis thaliana (Mouse-ear cress).